Reading from the N-terminus, the 431-residue chain is Arginine biosynthesis bifunctional protein ArgJ, mitochondrial (431 aa).

The substrate site is built by Thr-174, Lys-200, Thr-211, Glu-297, Asn-426, and Thr-431. Thr-211 (nucleophile) is an active-site residue.

The protein belongs to the ArgJ family. In terms of assembly, heterodimer of an alpha and a beta chain. Post-translationally, the alpha and beta chains are autoproteolytically processed from a single precursor protein within the mitochondrion.

It localises to the mitochondrion matrix. The catalysed reaction is N(2)-acetyl-L-ornithine + L-glutamate = N-acetyl-L-glutamate + L-ornithine. It catalyses the reaction L-glutamate + acetyl-CoA = N-acetyl-L-glutamate + CoA + H(+). It functions in the pathway amino-acid biosynthesis; L-arginine biosynthesis; L-ornithine and N-acetyl-L-glutamate from L-glutamate and N(2)-acetyl-L-ornithine (cyclic): step 1/1. Its pathway is amino-acid biosynthesis; L-arginine biosynthesis; N(2)-acetyl-L-ornithine from L-glutamate: step 1/4. In terms of biological role, catalyzes two activities which are involved in the cyclic version of arginine biosynthesis: the synthesis of acetylglutamate from glutamate and acetyl-CoA, and of ornithine by transacetylation between acetylornithine and glutamate. The protein is Arginine biosynthesis bifunctional protein ArgJ, mitochondrial of Yarrowia lipolytica (strain CLIB 122 / E 150) (Yeast).